The chain runs to 317 residues: CXXC-type zinc finger protein 5 (317 aa).

Gly residues predominate over residues Met1–Asp10. The interval Met1–Ser92 is disordered. Composition is skewed to low complexity over residues Ala11–Gly27 and Ser36–Asp51. The CXXC-type zinc finger occupies Gly251–Glu292. A Nuclear localization signal motif is present at residues Lys252–Arg257. The Zn(2+) site is built by Cys258, Cys261, Cys264, Cys270, Cys273, Cys276, Cys286, and Cys291.

As to quaternary structure, interacts with DVL1. Interacts with RBPJ.

It is found in the nucleus. It localises to the cytoplasm. In terms of biological role, may indirectly participate in activation of the NF-kappa-B and MAPK pathways. Acts as a mediator of BMP4-mediated modulation of canonical Wnt signaling activity in neural stem cells. Required for DNA damage-induced ATM phosphorylation, p53 activation and cell cycle arrest. Involved in myelopoiesis. Binds to the oxygen responsive element of COX4I2 and represses its transcription under hypoxia conditions (4% oxygen), as well as normoxia conditions (20% oxygen). May repress COX4I2 transactivation induced by CHCHD2 and RBPJ. Binds preferentially to DNA containing cytidine-phosphate-guanosine (CpG) dinucleotides over CpH (H=A, T, and C), hemimethylated-CpG and hemimethylated-hydroxymethyl-CpG. This is CXXC-type zinc finger protein 5 (Cxxc5) from Mus musculus (Mouse).